We begin with the raw amino-acid sequence, 623 residues long: Kelch repeat and BTB domain-containing protein 2 (623 aa).

Residues 31–98 form the BTB domain; it reads TDIVLIVEGT…AYTGNLAMND (68 aa). Positions 133-229 constitute a BACK domain; it reads CVRLLSFADL…IRIDALSEVT (97 aa). Residue Ser-300 is modified to Phosphoserine. 5 Kelch repeats span residues 317-380, 381-429, 431-469, 470-529, and 535-581; these read DIYI…CCEG, HIYA…VVHD, IYVM…AFGD, KIFY…RAVV, and CVFM…DFRC.

As to quaternary structure, component of the BCR(KBTBD2) E3 ubiquitin ligase complex, at least composed of CUL3, KBTBD2 and RBX1. Interacts (via the BTB domain) with CUL3.

It functions in the pathway protein modification; protein ubiquitination. Functionally, substrate-specific adapter of a BCR (BTB-CUL3-RBX1) E3 ubiquitin ligase complex that acts as a regulator of the insulin signaling pathway, modulating insulin sensitivity by limiting PIK3R1/p85alpha abundance in adipocytes. Targets PIK3R1, the regulatory subunit of phosphatidylinositol 3-kinase (PI3K), for 'Lys-48'-linked polyubiquitination and proteasome-mediated degradation. The polypeptide is Kelch repeat and BTB domain-containing protein 2 (KBTBD2) (Pongo abelii (Sumatran orangutan)).